The following is a 251-amino-acid chain: Eukaryotic translation initiation factor 3 subunit K (251 aa).

The PCI domain occupies 46–224; the sequence is FDCYANLALL…VKVPTNKENE (179 aa).

This sequence belongs to the eIF-3 subunit K family. As to quaternary structure, component of the eukaryotic translation initiation factor 3 (eIF-3) complex.

The protein resides in the cytoplasm. Its function is as follows. Component of the eukaryotic translation initiation factor 3 (eIF-3) complex, which is involved in protein synthesis of a specialized repertoire of mRNAs and, together with other initiation factors, stimulates binding of mRNA and methionyl-tRNAi to the 40S ribosome. The eIF-3 complex specifically targets and initiates translation of a subset of mRNAs involved in cell proliferation. This chain is Eukaryotic translation initiation factor 3 subunit K, found in Aspergillus oryzae (strain ATCC 42149 / RIB 40) (Yellow koji mold).